The following is a 605-amino-acid chain: Phosphoenolpyruvate carboxykinase [GTP] (605 aa).

Substrate contacts are provided by residues R79 and 218 to 220; that span reads YGG. The Mn(2+) site is built by K227 and H247. S269 is a binding site for substrate. 270 to 275 is a GTP binding site; sequence ACGKTN. C271 is a catalytic residue. D294 contacts Mn(2+). The segment covering 364–381 has biased composition (basic and acidic residues); sequence LTDWKGRDWTPQSDEKAA. Residues 364–385 form a disordered region; sequence LTDWKGRDWTPQSDEKAAHPNS. Residue 384–386 coordinates substrate; it reads NSR. GTP-binding positions include R386, R417, and 513–516; that span reads FGEN.

It belongs to the phosphoenolpyruvate carboxykinase [GTP] family. In terms of assembly, monomer. The cofactor is Mn(2+).

The protein localises to the cytoplasm. The enzyme catalyses oxaloacetate + GTP = phosphoenolpyruvate + GDP + CO2. Its pathway is carbohydrate biosynthesis; gluconeogenesis. Functionally, catalyzes the conversion of oxaloacetate (OAA) to phosphoenolpyruvate (PEP), the rate-limiting step in the metabolic pathway that produces glucose from lactate and other precursors derived from the citric acid cycle. In Saccharopolyspora erythraea (strain ATCC 11635 / DSM 40517 / JCM 4748 / NBRC 13426 / NCIMB 8594 / NRRL 2338), this protein is Phosphoenolpyruvate carboxykinase [GTP].